We begin with the raw amino-acid sequence, 576 residues long: Aspartate--tRNA ligase, cytoplasmic 1 (576 aa).

The tract at residues 1–78 is disordered; it reads MSETTPVPVG…NWGELPMNQS (78 aa). Positions 20 to 43 are enriched in basic and acidic residues; sequence LKKEQKKLEKEKKIAEAKAKKAAE. Residue E302 coordinates L-aspartate. Residues 324–327 form an aspartate region; it reads QLYK. R346 contacts L-aspartate. ATP-binding positions include 346 to 348, 354 to 356, and E499; these read RAE and RHL. 2 residues coordinate L-aspartate: S502 and R506. Position 547-550 (547-550) interacts with ATP; sequence GLER.

The protein belongs to the class-II aminoacyl-tRNA synthetase family. Type 2 subfamily.

It localises to the cytoplasm. The enzyme catalyses tRNA(Asp) + L-aspartate + ATP = L-aspartyl-tRNA(Asp) + AMP + diphosphate. This Dictyostelium discoideum (Social amoeba) protein is Aspartate--tRNA ligase, cytoplasmic 1 (aspS1).